The primary structure comprises 907 residues: Protein translocase subunit SecA (907 aa).

Residues Gln-87, Gly-105–Thr-109, and Asp-510 each bind ATP. Residues Cys-892, Cys-894, Cys-903, and His-904 each contribute to the Zn(2+) site.

Belongs to the SecA family. In terms of assembly, monomer and homodimer. Part of the essential Sec protein translocation apparatus which comprises SecA, SecYEG and auxiliary proteins SecDF-YajC and YidC. Zn(2+) serves as cofactor.

It is found in the cell inner membrane. The protein localises to the cytoplasm. The catalysed reaction is ATP + H2O + cellular proteinSide 1 = ADP + phosphate + cellular proteinSide 2.. Its function is as follows. Part of the Sec protein translocase complex. Interacts with the SecYEG preprotein conducting channel. Has a central role in coupling the hydrolysis of ATP to the transfer of proteins into and across the cell membrane, serving both as a receptor for the preprotein-SecB complex and as an ATP-driven molecular motor driving the stepwise translocation of polypeptide chains across the membrane. In Acinetobacter baumannii (strain AB0057), this protein is Protein translocase subunit SecA.